We begin with the raw amino-acid sequence, 166 residues long: Ubiquitin-conjugating enzyme E2 13 (166 aa).

A UBC core domain is found at 4-164 (QACLLLQKQL…VSRCVRKSQE (161 aa)). Residue Cys89 is the Glycyl thioester intermediate of the active site.

This sequence belongs to the ubiquitin-conjugating enzyme family.

It carries out the reaction S-ubiquitinyl-[E1 ubiquitin-activating enzyme]-L-cysteine + [E2 ubiquitin-conjugating enzyme]-L-cysteine = [E1 ubiquitin-activating enzyme]-L-cysteine + S-ubiquitinyl-[E2 ubiquitin-conjugating enzyme]-L-cysteine.. It participates in protein modification; protein ubiquitination. Its function is as follows. Accepts the ubiquitin from the E1 complex and catalyzes its covalent attachment to other proteins. Involved in the formation of multiubiquitin chains. Signal the protein for selective degradation. The sequence is that of Ubiquitin-conjugating enzyme E2 13 (UBC13) from Arabidopsis thaliana (Mouse-ear cress).